A 285-amino-acid chain; its full sequence is Acetylglutamate kinase (285 aa).

Substrate-binding positions include 64 to 65, R86, and N180; that span reads GG.

Belongs to the acetylglutamate kinase family. ArgB subfamily.

The protein localises to the plastid. It is found in the chloroplast. The enzyme catalyses N-acetyl-L-glutamate + ATP = N-acetyl-L-glutamyl 5-phosphate + ADP. Its pathway is amino-acid biosynthesis; L-arginine biosynthesis; N(2)-acetyl-L-ornithine from L-glutamate: step 2/4. Functionally, catalyzes the ATP-dependent phosphorylation of N-acetyl-L-glutamate. This Gracilaria tenuistipitata var. liui (Red alga) protein is Acetylglutamate kinase.